Reading from the N-terminus, the 114-residue chain is Protein yippee-like (114 aa).

One can recognise a Yippee domain in the interval 14 to 111; that stretch reads RTYSCVHCRA…IELAHMIKEN (98 aa). Cysteine 18, cysteine 21, cysteine 74, and cysteine 77 together coordinate Zn(2+).

It belongs to the yippee family.

In terms of biological role, involved in regulating synaptic transmission in presynaptic neurons. In class IV dendritic arborization neurons (nociceptors), involved in regulating activation of their second-order neurons (SONs) and maintaining synaptic contact between nociceptors and their SONs. This chain is Protein yippee-like, found in Drosophila melanogaster (Fruit fly).